Consider the following 296-residue polypeptide: Acetyl-coenzyme A carboxylase carboxyl transferase subunit beta (296 aa).

The 270-residue stretch at 25-294 (LWIKDPSTGE…NSDAPAPPEA (270 aa)) folds into the CoA carboxyltransferase N-terminal domain.

It belongs to the AccD/PCCB family. As to quaternary structure, acetyl-CoA carboxylase is a heterohexamer composed of biotin carboxyl carrier protein (AccB), biotin carboxylase (AccC) and two subunits each of ACCase subunit alpha (AccA) and ACCase subunit beta (AccD).

The protein resides in the cytoplasm. The enzyme catalyses N(6)-carboxybiotinyl-L-lysyl-[protein] + acetyl-CoA = N(6)-biotinyl-L-lysyl-[protein] + malonyl-CoA. Its pathway is lipid metabolism; malonyl-CoA biosynthesis; malonyl-CoA from acetyl-CoA: step 1/1. Functionally, component of the acetyl coenzyme A carboxylase (ACC) complex. Biotin carboxylase (BC) catalyzes the carboxylation of biotin on its carrier protein (BCCP) and then the CO(2) group is transferred by the transcarboxylase to acetyl-CoA to form malonyl-CoA. In Brucella ovis (strain ATCC 25840 / 63/290 / NCTC 10512), this protein is Acetyl-coenzyme A carboxylase carboxyl transferase subunit beta.